A 360-amino-acid polypeptide reads, in one-letter code: Phosphoserine aminotransferase (360 aa).

Arg42 provides a ligand contact to L-glutamate. Pyridoxal 5'-phosphate-binding residues include Trp102, Thr152, Asp171, and Gln194. Position 195 is an N6-(pyridoxal phosphate)lysine (Lys195). 237–238 (NT) contacts pyridoxal 5'-phosphate.

This sequence belongs to the class-V pyridoxal-phosphate-dependent aminotransferase family. SerC subfamily. In terms of assembly, homodimer. Requires pyridoxal 5'-phosphate as cofactor.

The protein localises to the cytoplasm. The enzyme catalyses O-phospho-L-serine + 2-oxoglutarate = 3-phosphooxypyruvate + L-glutamate. It carries out the reaction 4-(phosphooxy)-L-threonine + 2-oxoglutarate = (R)-3-hydroxy-2-oxo-4-phosphooxybutanoate + L-glutamate. The protein operates within amino-acid biosynthesis; L-serine biosynthesis; L-serine from 3-phospho-D-glycerate: step 2/3. It participates in cofactor biosynthesis; pyridoxine 5'-phosphate biosynthesis; pyridoxine 5'-phosphate from D-erythrose 4-phosphate: step 3/5. Functionally, catalyzes the reversible conversion of 3-phosphohydroxypyruvate to phosphoserine and of 3-hydroxy-2-oxo-4-phosphonooxybutanoate to phosphohydroxythreonine. The protein is Phosphoserine aminotransferase of Coxiella burnetii (strain RSA 331 / Henzerling II).